Reading from the N-terminus, the 1024-residue chain is Multidrug resistance protein MdtC (1024 aa).

12 consecutive transmembrane segments (helical) span residues 12-32, 333-353, 360-380, 387-407, 435-455, 469-489, 528-548, 853-873, 875-895, 897-917, 953-973, and 984-1004; these read VATTLLTLAITLSGIIGFSLL, EVERSLVIAVALVILVVFIFL, LIPAVAVPVSLIGTFAAMYLC, LSLMALTIATGFVVDDAIVVL, VLSMSISLVAVFIPLLLMAGL, VAIGISLVISLTLTPMMCAWL, WVMVVLLSTIALNVWLYISIP, LWLIMAAIATVYIVLGILYES, VHPLTILSTLPSAGVGALLAL, LFDAPFSLIALIGIMLLIGIV, PIIMTTLAALFGALPLVLSSG, and ITIVGGLVVSQLLTLYTTPVI.

Belongs to the resistance-nodulation-cell division (RND) (TC 2.A.6) family. MdtC subfamily. In terms of assembly, part of a tripartite efflux system composed of MdtA, MdtB and MdtC. MdtC forms a heteromultimer with MdtB.

It is found in the cell inner membrane. The chain is Multidrug resistance protein MdtC from Yersinia pestis bv. Antiqua (strain Antiqua).